The primary structure comprises 422 residues: uncharacterized protein (422 aa).

Belongs to the N(4)/N(6)-methyltransferase family.

The catalysed reaction is a 2'-deoxyadenosine in DNA + S-adenosyl-L-methionine = an N(6)-methyl-2'-deoxyadenosine in DNA + S-adenosyl-L-homocysteine + H(+). This is an uncharacterized protein from Mycoplasma pneumoniae (strain ATCC 29342 / M129 / Subtype 1) (Mycoplasmoides pneumoniae).